The following is a 631-amino-acid chain: Golgin subfamily A member 8A (631 aa).

The segment covering 1 to 20 has biased composition (basic and acidic residues); sequence MLPVDGEERKSEGSDTEGDR. Disordered stretches follow at residues 1–103, 127–154, 426–447, and 488–520; these read MLPV…QEQA, KKQVEHQLEEEKKANNEKQKAERELEGQ, TSAEKEPEAAVPASGTGGESSG, and PGDSAKDASPGGGHHQAGPGQGGEEGEAAGAAG. Low complexity predominate over residues 78–92; it reads SLYLSPKSSSASSSL. The segment covering 93 to 103 has biased composition (polar residues); that stretch reads HARQSPCQEQA. Residues 110–468 adopt a coiled-coil conformation; it reads SIKISRLNDT…REHVEKLELG (359 aa). A compositionally biased stretch (basic and acidic residues) spans 128–152; the sequence is KQVEHQLEEEKKANNEKQKAERELE. The segment covering 497–510 has biased composition (gly residues); the sequence is PGGGHHQAGPGQGG. A golgi-targeting domain region spans residues 519–631; it reads AGDGVAACGS…CWAWLPRRRR (113 aa).

This sequence belongs to the GOLGA8 family.

It is found in the golgi apparatus. Its subcellular location is the golgi stack membrane. Its function is as follows. May be involved in maintaining Golgi structure. In Homo sapiens (Human), this protein is Golgin subfamily A member 8A (GOLGA8A).